The following is a 203-amino-acid chain: Cilia- and flagella-associated protein 20 (203 aa).

Belongs to the CFAP20 family.

Its subcellular location is the nucleus. It is found in the cytoplasm. The protein localises to the cytoskeleton. It localises to the microtubule organizing center. The protein resides in the centrosome. Its subcellular location is the centriole. It is found in the cilium basal body. The protein localises to the cilium axoneme. Functionally, cilium- and flagellum-specific protein that plays a role in axonemal structure organization and motility. Microtubule inner protein (MIP) part of the dynein-decorated doublet microtubules (DMTs) in cilia axoneme, which is required for motile cilia beating. Involved in the regulation of the size and morphology of cilia. Required for axonemal microtubules polyglutamylation. The chain is Cilia- and flagella-associated protein 20 from Caenorhabditis briggsae.